The primary structure comprises 255 residues: Triosephosphate isomerase (255 aa).

10-12 contributes to the substrate binding site; the sequence is NWK. Residue H96 is the Electrophile of the active site. Residue E169 is the Proton acceptor of the active site. Substrate contacts are provided by residues G175, S214, and 235 to 236; that span reads GG.

It belongs to the triosephosphate isomerase family. As to quaternary structure, homodimer.

The protein resides in the cytoplasm. The enzyme catalyses D-glyceraldehyde 3-phosphate = dihydroxyacetone phosphate. The protein operates within carbohydrate biosynthesis; gluconeogenesis. It participates in carbohydrate degradation; glycolysis; D-glyceraldehyde 3-phosphate from glycerone phosphate: step 1/1. Functionally, involved in the gluconeogenesis. Catalyzes stereospecifically the conversion of dihydroxyacetone phosphate (DHAP) to D-glyceraldehyde-3-phosphate (G3P). The protein is Triosephosphate isomerase of Coxiella burnetii (strain Dugway 5J108-111).